Reading from the N-terminus, the 242-residue chain is MIKIGIYGAKGRMGKQIEECLKSETQAQISILYDKGGNLEELFEKSDVIIDFSSPSGTHELLNYARTMPKPLVIGTTGLDEKILHLMQSASEVMPIFYATNMSLGVAVLNYLASKASQMLKNFDIEILEMHHRHKKDAPSGTAMTLAQSVAKARNLELEKVRVSGRDGIIGERSKDEIAVMSLRGGDIVGRHTVGFYEDGEFLELNHTATSRATFAKGAIKIAIWLSKQEAKMYSINDFLGI.

NAD(+) contacts are provided by residues G8–M13, G75–T77, and A99–M102. H131 functions as the Proton donor/acceptor in the catalytic mechanism. H132 provides a ligand contact to (S)-2,3,4,5-tetrahydrodipicolinate. The Proton donor role is filled by K135. G141–T142 lines the (S)-2,3,4,5-tetrahydrodipicolinate pocket.

The protein belongs to the DapB family.

It localises to the cytoplasm. The catalysed reaction is (S)-2,3,4,5-tetrahydrodipicolinate + NAD(+) + H2O = (2S,4S)-4-hydroxy-2,3,4,5-tetrahydrodipicolinate + NADH + H(+). It catalyses the reaction (S)-2,3,4,5-tetrahydrodipicolinate + NADP(+) + H2O = (2S,4S)-4-hydroxy-2,3,4,5-tetrahydrodipicolinate + NADPH + H(+). Its pathway is amino-acid biosynthesis; L-lysine biosynthesis via DAP pathway; (S)-tetrahydrodipicolinate from L-aspartate: step 4/4. In terms of biological role, catalyzes the conversion of 4-hydroxy-tetrahydrodipicolinate (HTPA) to tetrahydrodipicolinate. The protein is 4-hydroxy-tetrahydrodipicolinate reductase of Campylobacter jejuni subsp. jejuni serotype O:6 (strain 81116 / NCTC 11828).